The primary structure comprises 1119 residues: DNA-directed RNA polymerase subunit beta (1119 aa).

This sequence belongs to the RNA polymerase beta chain family. In terms of assembly, the RNAP catalytic core consists of 2 alpha, 1 beta, 1 beta' and 1 omega subunit. When a sigma factor is associated with the core the holoenzyme is formed, which can initiate transcription.

The catalysed reaction is RNA(n) + a ribonucleoside 5'-triphosphate = RNA(n+1) + diphosphate. Functionally, DNA-dependent RNA polymerase catalyzes the transcription of DNA into RNA using the four ribonucleoside triphosphates as substrates. This Thermus thermophilus (strain ATCC 27634 / DSM 579 / HB8) protein is DNA-directed RNA polymerase subunit beta.